The following is a 303-amino-acid chain: Recombination-associated protein RdgC (303 aa).

The protein belongs to the RdgC family.

Its subcellular location is the cytoplasm. The protein resides in the nucleoid. In terms of biological role, may be involved in recombination. The chain is Recombination-associated protein RdgC from Shewanella loihica (strain ATCC BAA-1088 / PV-4).